A 639-amino-acid polypeptide reads, in one-letter code: Tetracycline resistance protein TetM from transposon Tn5251 (639 aa).

Positions 1–242 constitute a tr-type G domain; that stretch reads MKIINIGVLA…VITNKFYSST (242 aa). GTP contacts are provided by residues 10-17, 74-78, and 128-131; these read AHVDAGKT, DTPGH, and NKID.

Belongs to the TRAFAC class translation factor GTPase superfamily. Classic translation factor GTPase family. TetM/TetO subfamily.

Its function is as follows. Abolishes the inhibitory effect of tetracyclin on protein synthesis by a non-covalent modification of the ribosomes. The chain is Tetracycline resistance protein TetM from transposon Tn5251 (tetM(5251)) from Streptococcus pneumoniae.